Consider the following 124-residue polypeptide: Small ribosomal subunit protein bS6 (124 aa).

The segment at 96 to 124 (ETGPSPMMKEVQREEAKKAAAAQPAEAQA) is disordered. The span at 114–124 (AAAAQPAEAQA) shows a compositional bias: low complexity.

Belongs to the bacterial ribosomal protein bS6 family.

Its function is as follows. Binds together with bS18 to 16S ribosomal RNA. The protein is Small ribosomal subunit protein bS6 of Burkholderia orbicola (strain AU 1054).